The primary structure comprises 382 residues: ADP,ATP carrier protein, mitochondrial (382 aa).

The transit peptide at 1 to 71 (MAEQANQPTV…PMMSSSPIFA (71 aa)) directs the protein to the mitochondrion. 3 Solcar repeats span residues 80–173 (KNFM…FKRL), 185–277 (KWFG…LKPV), and 285–371 (DNFF…LQIL). The next 5 helical transmembrane spans lie at 82–109 (FMID…VKLL), 150–174 (TANV…KRLF), 183–203 (YWKW…SSLF), 253–274 (FNIS…YDSL), and 288–308 (FASF…SYPI). Residues Arg-155 and Lys-167 each contribute to the ADP site. Residue Arg-312 coordinates ADP. The tract at residues 312 to 317 (RRRMMM) is important for transport activity. A Nucleotide carrier signature motif motif is present at residues 312–317 (RRRMMM). A helical membrane pass occupies residues 348-368 (AGANILRAIAGAGVLSGYDQL).

The protein belongs to the mitochondrial carrier (TC 2.A.29) family. Monomer.

Its subcellular location is the mitochondrion inner membrane. It carries out the reaction ADP(in) + ATP(out) = ADP(out) + ATP(in). The matrix-open state (m-state) is inhibited by the membrane-permeable bongkrekic acid (BKA). The cytoplasmic-open state (c-state) is inhibited by the membrane-impermeable toxic inhibitor carboxyatractyloside (CATR). ADP:ATP antiporter that mediates import of ADP into the mitochondrial matrix for ATP synthesis, and export of ATP out to fuel the cell. Cycles between the cytoplasmic-open state (c-state) and the matrix-open state (m-state): operates by the alternating access mechanism with a single substrate-binding site intermittently exposed to either the cytosolic (c-state) or matrix (m-state) side of the inner mitochondrial membrane. This chain is ADP,ATP carrier protein, mitochondrial, found in Oryza sativa subsp. japonica (Rice).